The primary structure comprises 558 residues: Trehalase 1 (558 aa).

The protein belongs to the glycosyl hydrolase 15 family.

The enzyme catalyses alpha,alpha-trehalose + H2O = alpha-D-glucose + beta-D-glucose. Its pathway is glycan degradation; trehalose degradation; D-glucose from alpha,alpha-trehalose: step 1/1. Functionally, catalyzes the hydrolysis of alpha,alpha-trehalose into two molecules of D-glucose. The protein is Trehalase 1 (treH1) of Sulfolobus acidocaldarius (strain ATCC 33909 / DSM 639 / JCM 8929 / NBRC 15157 / NCIMB 11770).